The primary structure comprises 93 residues: Small ribosomal subunit protein uS19 (93 aa).

Belongs to the universal ribosomal protein uS19 family.

Protein S19 forms a complex with S13 that binds strongly to the 16S ribosomal RNA. The protein is Small ribosomal subunit protein uS19 of Alkaliphilus oremlandii (strain OhILAs) (Clostridium oremlandii (strain OhILAs)).